The primary structure comprises 266 residues: Undecaprenyl-diphosphatase 1 (266 aa).

The next 8 helical transmembrane spans lie at 1 to 21 (MSIIEIIVLALIQGFTEFLPI), 39 to 59 (QGLAFDVAVHVGTLIAVVIYF), 83 to 103 (SKLGWWIILGTIPAAILGLLL), 113 to 133 (SAWVIAVTTIIFGLLLWYADA), 141 to 161 (IYQLNWKTALIIGLAQAVAMI), 189 to 209 (FLLAIPIISMMGLYYTVELAL), 218 to 238 (TLLLGVVLSFLSAYVCIYMFL), and 244 to 264 (MGMLPFVIYRLLLGVGLIVFL).

This sequence belongs to the UppP family.

The protein resides in the cell inner membrane. The enzyme catalyses di-trans,octa-cis-undecaprenyl diphosphate + H2O = di-trans,octa-cis-undecaprenyl phosphate + phosphate + H(+). Its function is as follows. Catalyzes the dephosphorylation of undecaprenyl diphosphate (UPP). Confers resistance to bacitracin. This Pseudoalteromonas translucida (strain TAC 125) protein is Undecaprenyl-diphosphatase 1.